The chain runs to 313 residues: MPWKEESEFTKQDKAARVIQQAWKSFLNVAIFQHFKSLIDLRRQGEPRQIVKYINPKEAELLDAAAGIHVRFRLGGVKFPPDIYYKIFTHRPIEDLCANSPRNYAKLPAKHTSHNKNDHLQEEDHSGWYHRIENNGWRPVSDTFWLSTDGMVVEDKKESEFHFSKLKRRQDLEKKRKLRKIEWMRQMYYSGSLEAKSTHHETLGLIHTATKGLIRAFEDGGIDSVMEWEVDEVLNWTNTLNFDEYIASWKEIATSNSSANFKGFRFNQAQKNIYNYGGDISKMQMGIPDDTYYENVYQEPNVTRLTPDSTYGL.

As to quaternary structure, can homodimerize. Interacts with MFF; the interaction inhibits MFF interaction with DNM1L. In terms of tissue distribution, enriched in the pancreatic beta cell and the testis and is expressed at low levels in other tissues tested.

It is found in the cytoplasm. The protein resides in the cytosol. The protein localises to the mitochondrion outer membrane. Acts as an inhibitor of mitochondrial fission. Interacts with MFF and prevents DNM1L recruitment to mitochondria, promoting a more fused mitochondrial network. The chain is Protein MFI from Homo sapiens (Human).